The sequence spans 782 residues: Phosphoribosylformylglycinamidine synthase subunit PurL (782 aa).

Histidine 48 is an active-site residue. ATP is bound by residues tyrosine 51 and lysine 90. Glutamate 92 contacts Mg(2+). Residues 93 to 96 (SHNH) and arginine 115 contribute to the substrate site. Histidine 94 (proton acceptor) is an active-site residue. Aspartate 116 is a Mg(2+) binding site. A substrate-binding site is contributed by glutamine 239. Aspartate 267 contributes to the Mg(2+) binding site. 311 to 313 (ESQ) contributes to the substrate binding site. ATP contacts are provided by aspartate 525 and glycine 562. A Mg(2+)-binding site is contributed by asparagine 563. Serine 565 is a substrate binding site.

The protein belongs to the FGAMS family. As to quaternary structure, monomer. Part of the FGAM synthase complex composed of 1 PurL, 1 PurQ and 2 PurS subunits.

Its subcellular location is the cytoplasm. The catalysed reaction is N(2)-formyl-N(1)-(5-phospho-beta-D-ribosyl)glycinamide + L-glutamine + ATP + H2O = 2-formamido-N(1)-(5-O-phospho-beta-D-ribosyl)acetamidine + L-glutamate + ADP + phosphate + H(+). The protein operates within purine metabolism; IMP biosynthesis via de novo pathway; 5-amino-1-(5-phospho-D-ribosyl)imidazole from N(2)-formyl-N(1)-(5-phospho-D-ribosyl)glycinamide: step 1/2. Functionally, part of the phosphoribosylformylglycinamidine synthase complex involved in the purines biosynthetic pathway. Catalyzes the ATP-dependent conversion of formylglycinamide ribonucleotide (FGAR) and glutamine to yield formylglycinamidine ribonucleotide (FGAM) and glutamate. The FGAM synthase complex is composed of three subunits. PurQ produces an ammonia molecule by converting glutamine to glutamate. PurL transfers the ammonia molecule to FGAR to form FGAM in an ATP-dependent manner. PurS interacts with PurQ and PurL and is thought to assist in the transfer of the ammonia molecule from PurQ to PurL. This is Phosphoribosylformylglycinamidine synthase subunit PurL from Nostoc sp. (strain PCC 7120 / SAG 25.82 / UTEX 2576).